A 318-amino-acid polypeptide reads, in one-letter code: dTDP-6-deoxy-L-talose 4-dehydrogenase (NAD(P)(+)) (318 aa).

NAD(+) contacts are provided by residues 19 to 20 (FI), 60 to 61 (DP), Asn95, Thr120, Tyr145, and Lys149. Residues Thr120 and Tyr145 each contribute to the substrate site. The active-site Proton acceptor is Tyr145.

This sequence belongs to the NAD(P)-dependent epimerase/dehydratase family.

The enzyme catalyses dTDP-6-deoxy-beta-L-talose + NAD(+) = dTDP-4-dehydro-beta-L-rhamnose + NADH + H(+). It carries out the reaction dTDP-6-deoxy-beta-L-talose + NADP(+) = dTDP-4-dehydro-beta-L-rhamnose + NADPH + H(+). Catalyzes the reduction of dTDP-6-deoxy-L-lyxo-4-hexulose to dTDP-6-deoxy-L-talose. Can use NAD(+) or NADP(+). The sequence is that of dTDP-6-deoxy-L-talose 4-dehydrogenase (NAD(P)(+)) (tal) from Kitasatospora kifunensis (Streptomyces kifunensis).